Reading from the N-terminus, the 419-residue chain is MAGDSRNAMNQDMEIGVTSQDHKKIPKQARDYIPIATDRTRLLPEGKKPRQRYMEKTGKCNVHHGNVQETYRYLSDLFTTLVDLKWRFNLLVFTMVYTITWLFFGFIWWLIAYVRGDLDHVGDQEWIPCVENLSGFVSAFLFSIETETTIGYGFRVITEKCPEGIILLLVQAILGSIVNAFMVGCMFVKISQPKKRAETLMFSNNAVISMRDEKLCLMFRVGDLRNSHIVEASIRAKLIKSRQTKEGEFIPLNQTDINVGFDTGDDRLFLVSPLIISHEINEKSPFWEMSRAQLEQEEFEVVVILEGMVEATGMTCQARSSYMDTEVLWGHRFTPVLTLEKGFYEVDYNTFHDTYETNTPSCCAKELAEMKRNGQLLQSLPSPPLLGGCAEAEKEAEAEHDEEEEPNGLSVSRATRGSM.

Topologically, residues 1–86 are cytoplasmic; the sequence is MAGDSRNAMN…LFTTLVDLKW (86 aa). Serine 5 bears the Phosphoserine mark. A helical membrane pass occupies residues 87–111; the sequence is RFNLLVFTMVYTITWLFFGFIWWLI. The Extracellular portion of the chain corresponds to 112-135; that stretch reads AYVRGDLDHVGDQEWIPCVENLSG. An intramembrane region (helical; Pore-forming) is located at residues 136–147; it reads FVSAFLFSIETE. The pore-forming intramembrane region spans 148-154; that stretch reads TTIGYGF. The Selectivity filter motif lies at 149–154; the sequence is TIGYGF. Residues 155–163 are Extracellular-facing; sequence RVITEKCPE. The chain crosses the membrane as a helical span at residues 164–185; sequence GIILLLVQAILGSIVNAFMVGC. The Cytoplasmic segment spans residues 186-419; it reads MFVKISQPKK…SVSRATRGSM (234 aa). Over residues 380–390 the composition is skewed to low complexity; it reads LPSPPLLGGCA. Residues 380–419 are disordered; sequence LPSPPLLGGCAEAEKEAEAEHDEEEEPNGLSVSRATRGSM. Positions 409–419 are enriched in polar residues; it reads LSVSRATRGSM.

The protein belongs to the inward rectifier-type potassium channel (TC 1.A.2.1) family. KCNJ5 subfamily. Associates with KCNJ3/GIRK1 or KCNJ6/GRIK2 to form a G-protein-activated heteromultimer pore-forming unit. The resulting inward current is much larger. Most abundant in heart tissue where it is found predominantly in atria. Also found in brain, kidney, liver, spleen, lung and thymus.

It localises to the membrane. The enzyme catalyses K(+)(in) = K(+)(out). Its activity is regulated as follows. Heteromultimer composed of KCNJ3/GIRK1 and KCNJ5/GIRK4 is activated by phosphatidylinositol 4,5 biphosphate (PtdIns(4,5)P2). In terms of biological role, inward rectifier potassium channels are characterized by a greater tendency to allow potassium to flow into the cell rather than out of it. Their voltage dependence is regulated by the concentration of extracellular potassium; as external potassium is raised, the voltage range of the channel opening shifts to more positive voltages. The inward rectification is mainly due to the blockage of outward current by internal magnesium. Can be blocked by external barium. This potassium channel is controlled by G proteins. This is G protein-activated inward rectifier potassium channel 4 (Kcnj5) from Rattus norvegicus (Rat).